The chain runs to 392 residues: Ribonuclease D (392 aa).

The region spanning 12–178 (LIETTEALAA…PVYEGLRARL (167 aa)) is the 3'-5' exonuclease domain. Residues 217 to 298 (NRRQLALVKA…ASTKAIPDAE (82 aa)) form the HRDC domain.

This sequence belongs to the RNase D family. A divalent metal cation serves as cofactor.

The protein resides in the cytoplasm. It catalyses the reaction Exonucleolytic cleavage that removes extra residues from the 3'-terminus of tRNA to produce 5'-mononucleotides.. Its function is as follows. Exonuclease involved in the 3' processing of various precursor tRNAs. Initiates hydrolysis at the 3'-terminus of an RNA molecule and releases 5'-mononucleotides. In Acidiphilium cryptum (strain JF-5), this protein is Ribonuclease D.